Here is a 284-residue protein sequence, read N- to C-terminus: Acetylglutamate kinase (284 aa).

Substrate contacts are provided by residues 64–65 (GG), Arg86, and Asn181.

The protein belongs to the acetylglutamate kinase family. ArgB subfamily.

The protein localises to the cytoplasm. It carries out the reaction N-acetyl-L-glutamate + ATP = N-acetyl-L-glutamyl 5-phosphate + ADP. Its pathway is amino-acid biosynthesis; L-arginine biosynthesis; N(2)-acetyl-L-ornithine from L-glutamate: step 2/4. Functionally, catalyzes the ATP-dependent phosphorylation of N-acetyl-L-glutamate. This is Acetylglutamate kinase from Nitratiruptor sp. (strain SB155-2).